Reading from the N-terminus, the 438-residue chain is Xylose isomerase (438 aa).

Residues H100 and D103 contribute to the active site. Residues E231, E267, H270, D295, D306, D308, and D338 each coordinate Mg(2+).

It belongs to the xylose isomerase family. In terms of assembly, homotetramer. Mg(2+) serves as cofactor.

The protein resides in the cytoplasm. It catalyses the reaction alpha-D-xylose = alpha-D-xylulofuranose. This chain is Xylose isomerase, found in Thermoanaerobacter sp. (strain X514).